Reading from the N-terminus, the 359-residue chain is Protein-glutamate methylesterase/protein-glutamine glutaminase 2 (359 aa).

A Response regulatory domain is found at 6–123 (KVMIVDDSAL…KSFLEDASND (118 aa)). At aspartate 57 the chain carries 4-aspartylphosphate. The CheB-type methylesterase domain occupies 167–359 (ERTTDQLVAI…GAIVGYGKSC (193 aa)). Residues serine 179, histidine 205, and aspartate 301 contribute to the active site.

This sequence belongs to the CheB family. Post-translationally, phosphorylated by CheA. Phosphorylation of the N-terminal regulatory domain activates the methylesterase activity.

The protein localises to the cytoplasm. It catalyses the reaction [protein]-L-glutamate 5-O-methyl ester + H2O = L-glutamyl-[protein] + methanol + H(+). The catalysed reaction is L-glutaminyl-[protein] + H2O = L-glutamyl-[protein] + NH4(+). Its function is as follows. Involved in chemotaxis. Part of a chemotaxis signal transduction system that modulates chemotaxis in response to various stimuli. Catalyzes the demethylation of specific methylglutamate residues introduced into the chemoreceptors (methyl-accepting chemotaxis proteins or MCP) by CheR. Also mediates the irreversible deamidation of specific glutamine residues to glutamic acid. The chain is Protein-glutamate methylesterase/protein-glutamine glutaminase 2 from Dechloromonas aromatica (strain RCB).